The chain runs to 432 residues: MTLWVLGLNHQTAPVDLRERAAFAGDALPRALDSLRILPQVREAALLSTCNRTELYAMADDPQTLVAWLDMHAPGLSGYLYQHRDAEAVRHLFRVATGLDSMVLGEPQILGQVKDAWAVARAHGALGSGLDRLFQQTFSVAKRARTDTRVGANPVSVASTAVRLAQESFARLNESTVLLVGAGETIELAAKHLSEGRVRRLLIANRTLAHAQTLATQHGGVALPLTELDRHLAEADVVFSATAAREPVVTRVQVEQALRTRKRKPMLLFDLAVPRDIEASVAELSDAYLYTVDDLERAVEDNRRSRREAADQAEAIIDLQVARYVETLQANERQAPLKRLRAFGDSTRDELLAKARQQLSNGKPADEVLEQLAHALTNRLLHPPTAALRDAALNNDLDLTSAADRLFPEKPGYRHPPVATPIVRTDDANPAP.

Residues 49–52 (TCNR), Ser-101, 106–108 (EPQ), and Gln-112 each bind substrate. Residue Cys-50 is the Nucleophile of the active site. Residue 181 to 186 (GAGETI) participates in NADP(+) binding. Positions 408–432 (PEKPGYRHPPVATPIVRTDDANPAP) are disordered.

This sequence belongs to the glutamyl-tRNA reductase family. In terms of assembly, homodimer.

It carries out the reaction (S)-4-amino-5-oxopentanoate + tRNA(Glu) + NADP(+) = L-glutamyl-tRNA(Glu) + NADPH + H(+). The protein operates within porphyrin-containing compound metabolism; protoporphyrin-IX biosynthesis; 5-aminolevulinate from L-glutamyl-tRNA(Glu): step 1/2. In terms of biological role, catalyzes the NADPH-dependent reduction of glutamyl-tRNA(Glu) to glutamate 1-semialdehyde (GSA). This is Glutamyl-tRNA reductase from Xanthomonas campestris pv. campestris (strain 8004).